The chain runs to 324 residues: tRNA N6-adenosine threonylcarbamoyltransferase (324 aa).

3 residues coordinate Fe cation: His107, His111, and Tyr127. Substrate contacts are provided by residues 127 to 131, Asp159, Gly172, Glu176, and Asn257; that span reads YVSGG. Asp285 provides a ligand contact to Fe cation.

The protein belongs to the KAE1 / TsaD family. As to quaternary structure, monomer. Component of the KEOPS complex that consists of Kae1, Bud32, Cgi121 and Pcc1; the whole complex dimerizes. The cofactor is Fe(2+).

Its subcellular location is the cytoplasm. The enzyme catalyses L-threonylcarbamoyladenylate + adenosine(37) in tRNA = N(6)-L-threonylcarbamoyladenosine(37) in tRNA + AMP + H(+). Functionally, required for the formation of a threonylcarbamoyl group on adenosine at position 37 (t(6)A37) in tRNAs that read codons beginning with adenine. Is a component of the KEOPS complex that is probably involved in the transfer of the threonylcarbamoyl moiety of threonylcarbamoyl-AMP (TC-AMP) to the N6 group of A37. Kae1 likely plays a direct catalytic role in this reaction, but requires other protein(s) of the complex to fulfill this activity. The chain is tRNA N6-adenosine threonylcarbamoyltransferase from Thermococcus sibiricus (strain DSM 12597 / MM 739).